Reading from the N-terminus, the 484-residue chain is MVHLGPKPAQKRKGTFTDVSPQLLEALKPIQEQFTISADKLRAIVKHFISELDRGLSKAGGNIPMIPGWVMDFPTGKETGSYLAIDLGGTNLRVVLVKLGGNRDFDTTQSKFALPAHMRTATSDELWDFIAKCLKEFVDEIYPDGCSEPLPLGFTFSYPASQNRINEGILQRWTKGWSIDGIEGKDVVPMLQKAIKKVGVPIDVVALINDTTGTLVASMYTDPEAKMGLIFGTGVNGAYFDVVKDIPKLEGKCPSDIPPESPMAINCEYGSFDNEKYILPRTKYDVQIDEESPRPGQQTFEKMISGYYLGEVLRLILLEFAEEKKLIFKGQNLDKLKVPYVMDASYPSKIEEDPFENLSDVADLFREKLGIETTEPERKIIRCLAELIGERSARFSVCGIAAICQKRGYKTAHCAADGSVYNKYPGFKERTAQALRDIYEWPADVKDPIIIVPAEDGSGVGAAVIAALTEKRLKEGKSVGLLGA.

One can recognise a Hexokinase domain in the interval 21 to 467 (PQLLEALKPI…SGVGAAVIAA (447 aa)). Residues 75–208 (TGKETGSYLA…GVPIDVVALI (134 aa)) form a hexokinase small subdomain region. Residues 209 to 456 (NDTTGTLVAS…DPIIIVPAED (248 aa)) are hexokinase large subdomain.

The protein belongs to the hexokinase family. Monomer.

The protein localises to the cytoplasm. The enzyme catalyses a D-hexose + ATP = a D-hexose 6-phosphate + ADP + H(+). It carries out the reaction D-fructose + ATP = D-fructose 6-phosphate + ADP + H(+). The catalysed reaction is D-glucose + ATP = D-glucose 6-phosphate + ADP + H(+). It functions in the pathway carbohydrate metabolism; hexose metabolism. Its pathway is carbohydrate degradation; glycolysis; D-glyceraldehyde 3-phosphate and glycerone phosphate from D-glucose: step 1/4. In terms of biological role, catalyzes the phosphorylation of hexose, such as D-glucose and D-fructose, to hexose 6-phosphate (D-glucose 6-phosphate and D-fructose 6-phosphate, respectively). Mediates the initial step of glycolysis by catalyzing phosphorylation of D-glucose to D-glucose 6-phosphate. This chain is Hexokinase-2 (HXK2), found in Candida albicans (strain SC5314 / ATCC MYA-2876) (Yeast).